We begin with the raw amino-acid sequence, 163 residues long: ATP synthase subunit b 1 (163 aa).

The chain crosses the membrane as a helical span at residues 5 to 25 (FDATFFAFVGLILFLALVVYL).

Belongs to the ATPase B chain family. As to quaternary structure, F-type ATPases have 2 components, F(1) - the catalytic core - and F(0) - the membrane proton channel. F(1) has five subunits: alpha(3), beta(3), gamma(1), delta(1), epsilon(1). F(0) has three main subunits: a(1), b(2) and c(10-14). The alpha and beta chains form an alternating ring which encloses part of the gamma chain. F(1) is attached to F(0) by a central stalk formed by the gamma and epsilon chains, while a peripheral stalk is formed by the delta and b chains.

It localises to the cell inner membrane. Its function is as follows. F(1)F(0) ATP synthase produces ATP from ADP in the presence of a proton or sodium gradient. F-type ATPases consist of two structural domains, F(1) containing the extramembraneous catalytic core and F(0) containing the membrane proton channel, linked together by a central stalk and a peripheral stalk. During catalysis, ATP synthesis in the catalytic domain of F(1) is coupled via a rotary mechanism of the central stalk subunits to proton translocation. Functionally, component of the F(0) channel, it forms part of the peripheral stalk, linking F(1) to F(0). This chain is ATP synthase subunit b 1, found in Rhizobium etli (strain ATCC 51251 / DSM 11541 / JCM 21823 / NBRC 15573 / CFN 42).